Consider the following 526-residue polypeptide: Zinc finger protein Helios (526 aa).

The segment at 28-94 is disordered; the sequence is DLTSSTPNGQ…IESSEVADNR (67 aa). Over residues 29 to 50 the composition is skewed to polar residues; sequence LTSSTPNGQHASPSHMTSTNSV. Position 56 is a phosphoserine (serine 56). A compositionally biased stretch (basic and acidic residues) spans 61–77; it reads DRQPLSREDEIRGHDEG. Phosphoserine is present on residues serine 78 and serine 79. A Glycyl lysine isopeptide (Lys-Gly) (interchain with G-Cter in SUMO2) cross-link involves residue lysine 95. 4 consecutive C2H2-type zinc fingers follow at residues 112 to 134, 140 to 162, 168 to 190, and 196 to 219; these read LKCD…KRSH, FHCN…IKLH, FKCP…LRTH, and HKCN…ERCH. Position 288 is an N6-acetyllysine (lysine 288). The segment covering 368-379 has biased composition (basic and acidic residues); sequence ISRETSDSHENN. Positions 368 to 435 are disordered; the sequence is ISRETSDSHE…LNPKRKQSPA (68 aa). Residues lysine 442 and lysine 448 each participate in a glycyl lysine isopeptide (Lys-Gly) (interchain with G-Cter in SUMO2) cross-link. C2H2-type zinc fingers lie at residues 471–493 and 499–523; these read FKCE…MGCH and LECN…RGEH.

It belongs to the Ikaros C2H2-type zinc-finger protein family. As to quaternary structure, can form homodimers. Interacts with IKZF4 and IKZF5. Expressed in outer hair cells (OHC) of the organ of Corti. Abundant in thymus, low expression in bone marrow and brain and no detectable expression in spleen, liver, kidney or muscle. Expressed in T-cells.

The protein localises to the nucleus. Its function is as follows. Transcriptional regulator required for outer hair cells (OHC) maturation and, consequently, for hearing. This is Zinc finger protein Helios (Ikzf2) from Mus musculus (Mouse).